Here is a 268-residue protein sequence, read N- to C-terminus: Elongation factor Ts (268 aa).

The interval 81 to 84 is involved in Mg(2+) ion dislocation from EF-Tu; sequence TDFV.

It belongs to the EF-Ts family.

Its subcellular location is the cytoplasm. Associates with the EF-Tu.GDP complex and induces the exchange of GDP to GTP. It remains bound to the aminoacyl-tRNA.EF-Tu.GTP complex up to the GTP hydrolysis stage on the ribosome. This Buchnera aphidicola subsp. Acyrthosiphon pisum (strain 5A) protein is Elongation factor Ts.